The sequence spans 169 residues: Macro domain-containing protein SCO6450 (169 aa).

A Macro domain is found at 1-169; that stretch reads MTGITLVQGD…AYEAFAARLG (169 aa).

It belongs to the MacroD-type family.

This chain is Macro domain-containing protein SCO6450, found in Streptomyces coelicolor (strain ATCC BAA-471 / A3(2) / M145).